Reading from the N-terminus, the 107-residue chain is RNA polymerase II transcriptional coactivator KIWI (107 aa).

A disordered region spans residues 1-40; that stretch reads MSSRGKRKDEDVRASDDESETHAPAKKVAKPADDSDQSDD. Over residues 7–23 the composition is skewed to basic and acidic residues; that stretch reads RKDEDVRASDDESETHA.

The protein belongs to the transcriptional coactivator PC4 family.

The protein localises to the nucleus. Functionally, general coactivator that functions cooperatively with TAFs and mediates functional interactions between upstream activators and the general transcriptional machinery. Binds single-stranded DNA. This is RNA polymerase II transcriptional coactivator KIWI (KIWI) from Arabidopsis thaliana (Mouse-ear cress).